The chain runs to 268 residues: MNMKEISKVVDLVRESNPLVHNITNVVVTNFTANGLLALGASPVMAYAKEEVAEMASIAGALVLNMGTLRPEEVEAMLLAGKSANVNNVPVLFDPVGAGATSYRTEVARHIPAEIELAIIRGNAAEIANVINERWEIKGVDAGAGNGNVVSIAKQAADELNTVAVITGEEDVVTDGERTIVIQNGHSILTKVTGTGCLLTSVIGAFVAVEKDYVKAAIAALTFYGVAAELAAAKTVEKGPGSFQIEFLNQLANTTSGDIEKYGKIEVI.

Met45 contacts substrate. Arg121 and Thr167 together coordinate ATP. Gly194 is a binding site for substrate.

It belongs to the Thz kinase family. The cofactor is Mg(2+).

It catalyses the reaction 5-(2-hydroxyethyl)-4-methylthiazole + ATP = 4-methyl-5-(2-phosphooxyethyl)-thiazole + ADP + H(+). It participates in cofactor biosynthesis; thiamine diphosphate biosynthesis; 4-methyl-5-(2-phosphoethyl)-thiazole from 5-(2-hydroxyethyl)-4-methylthiazole: step 1/1. Functionally, catalyzes the phosphorylation of the hydroxyl group of 4-methyl-5-beta-hydroxyethylthiazole (THZ). In Bacillus cereus (strain ATCC 10987 / NRS 248), this protein is Hydroxyethylthiazole kinase.